The sequence spans 373 residues: Putative glutamate--cysteine ligase 2-1 (373 aa).

This sequence belongs to the glutamate--cysteine ligase type 2 family. YbdK subfamily.

The catalysed reaction is L-cysteine + L-glutamate + ATP = gamma-L-glutamyl-L-cysteine + ADP + phosphate + H(+). ATP-dependent carboxylate-amine ligase which exhibits weak glutamate--cysteine ligase activity. The sequence is that of Putative glutamate--cysteine ligase 2-1 from Legionella pneumophila (strain Lens).